The chain runs to 329 residues: uncharacterized protein (329 aa).

An N-terminal signal peptide occupies residues 1–32 (MSQDRGPRRPRRLEKCALISASATVLSLTASG). A lipid anchor (N-palmitoyl cysteine) is attached at Cys33. Residue Cys33 is the site of S-diacylglycerol cysteine attachment.

It localises to the cell membrane. This is an uncharacterized protein from Streptomyces coelicolor (strain ATCC BAA-471 / A3(2) / M145).